The chain runs to 131 residues: Phosphomevalonate dehydratase small subunit (131 aa).

S62 acts as the Proton acceptor in catalysis.

Belongs to the AcnX type II small subunit family. As to quaternary structure, heterodimer composed of a large subunit (PMDh-L) and a small subunit (PMDh-S).

It carries out the reaction (R)-5-phosphomevalonate = (2E)-3-methyl-5-phosphooxypent-2-enoate + H2O. Its pathway is isoprenoid biosynthesis; isopentenyl diphosphate biosynthesis via mevalonate pathway. Component of a hydro-lyase that catalyzes the dehydration of mevalonate 5-phosphate (MVA5P) to form trans-anhydromevalonate 5-phosphate (tAHMP). Involved in the archaeal mevalonate (MVA) pathway, which provides fundamental precursors for isoprenoid biosynthesis, such as isopentenyl diphosphate (IPP) and dimethylallyl diphosphate (DMAPP). This is Phosphomevalonate dehydratase small subunit from Thermococcus gammatolerans (strain DSM 15229 / JCM 11827 / EJ3).